Here is a 516-residue protein sequence, read N- to C-terminus: 2-isopropylmalate synthase (516 aa).

Residues I10–A271 form the Pyruvate carboxyltransferase domain. Mn(2+)-binding residues include D19, H205, H207, and N241. The interval E396–P516 is regulatory domain.

It belongs to the alpha-IPM synthase/homocitrate synthase family. LeuA type 1 subfamily. Homodimer. Mn(2+) serves as cofactor.

Its subcellular location is the cytoplasm. The enzyme catalyses 3-methyl-2-oxobutanoate + acetyl-CoA + H2O = (2S)-2-isopropylmalate + CoA + H(+). Its pathway is amino-acid biosynthesis; L-leucine biosynthesis; L-leucine from 3-methyl-2-oxobutanoate: step 1/4. Catalyzes the condensation of the acetyl group of acetyl-CoA with 3-methyl-2-oxobutanoate (2-ketoisovalerate) to form 3-carboxy-3-hydroxy-4-methylpentanoate (2-isopropylmalate). The chain is 2-isopropylmalate synthase from Acidimicrobium ferrooxidans (strain DSM 10331 / JCM 15462 / NBRC 103882 / ICP).